The sequence spans 387 residues: MGFARLLHLVFSLLVFAGITNGLICPFDSIYQLGDSFSDTGNLIRLPPDGPTFTAAHFPYGETFPGTPTGRCSDGRLIIDFIATALNLPLLNPYLQQNVSFRHGVNFAVAGATALDRSFLAARGVQVSDIHSHLSAQLNWFRTYLGSICSTPKECSNKLKNALFILGNIGNNDVNYAFPNRTIEEIRAYVPFITEAVANATREIIRLGGSRVIVPGIFPIGCVARNLNFLNFFPDGDKDDLGCLSSLNNLSIYFNSLFQRALASLSIEFPQAVIIYADYYNAWRFLFRNGPALGSNSTSLLKCCCGIGGPYNYDPDRECGSRGVPVCPNPTQYIQWDGTHFTQAAYRRVAEYVIPGIIKALKCSYSNIQPFLREGEGRQALRLNERE.

A signal peptide spans Met-1–Gly-22. The active-site Nucleophile is the Ser-36. Residues Asn-98, Asn-180, Asn-199, Asn-249, and Asn-296 are each glycosylated (N-linked (GlcNAc...) asparagine). Residues Asp-337 and His-340 contribute to the active site.

Belongs to the 'GDSL' lipolytic enzyme family.

It catalyses the reaction 17-O-acetylajmaline + H2O = ajmaline + acetate + H(+). The catalysed reaction is 17-O-acetylnorajmaline + H2O = norajmaline + acetate + H(+). It functions in the pathway alkaloid biosynthesis; ajmaline biosynthesis. Acetylesterase involved in the biosynthesis of ajmaline-type monoterpenoid indole alkaloids (MIAs) natural products, important plant-derived pharmaceuticals used in the therapy of heart disorders. Deacetylates 17-O-acetylajmaline and 17-O-acetylnorajmaline to produce ajmaline and norajmaline, but is inactive toward other acetylated alkaloids. In Rauvolfia serpentina (Serpentine wood), this protein is Acetylajmalan esterase.